Reading from the N-terminus, the 229-residue chain is Ribosomal RNA small subunit methyltransferase G (229 aa).

Residues glycine 87, leucine 92, 138-139 (VE), and arginine 154 each bind S-adenosyl-L-methionine.

This sequence belongs to the methyltransferase superfamily. RNA methyltransferase RsmG family.

The protein localises to the cytoplasm. The enzyme catalyses guanosine(527) in 16S rRNA + S-adenosyl-L-methionine = N(7)-methylguanosine(527) in 16S rRNA + S-adenosyl-L-homocysteine. Its function is as follows. Specifically methylates the N7 position of guanine in position 527 of 16S rRNA. The polypeptide is Ribosomal RNA small subunit methyltransferase G (Oleidesulfovibrio alaskensis (strain ATCC BAA-1058 / DSM 17464 / G20) (Desulfovibrio alaskensis)).